Consider the following 780-residue polypeptide: ATP-dependent 6-phosphofructokinase, liver type (780 aa).

N-acetylalanine is present on Ala-2. The interval Ala-2–His-390 is N-terminal catalytic PFK domain 1. ATP is bound by residues Gly-25, Arg-88 to Cys-89, and Gly-118 to Ser-121. Asp-119 is a Mg(2+) binding site. Substrate contacts are provided by residues Ser-164–Asp-166, Arg-201, Met-208–Arg-210, Glu-264, Arg-292, and His-298–Arg-301. The Proton acceptor role is filled by Asp-166. Ser-377 carries the post-translational modification Phosphoserine. An interdomain linker region spans residues Gln-391–Phe-400. The C-terminal regulatory PFK domain 2 stretch occupies residues Ser-401–Phe-780. Beta-D-fructose 2,6-bisphosphate is bound by residues Arg-470, Thr-527–Asn-531, Arg-565, Met-572–Gly-574, and Glu-628. A glycan (O-linked (GlcNAc) serine) is linked at Ser-529. A Phosphotyrosine modification is found at Tyr-640. Beta-D-fructose 2,6-bisphosphate-binding positions include Arg-654, His-660–Gln-663, and Arg-734. Ser-775 is modified (phosphoserine).

The protein belongs to the phosphofructokinase type A (PFKA) family. ATP-dependent PFK group I subfamily. Eukaryotic two domain clade 'E' sub-subfamily. In terms of assembly, homo- and heterotetramers. Phosphofructokinase (PFK) enzyme functions as a tetramer composed of different combinations of 3 types of subunits, called PFKM (M), PFKL (L) and PFKP (P). The composition of the PFK tetramer differs according to the tissue type it is present in. The kinetic and regulatory properties of the tetrameric enzyme are dependent on the subunit composition, hence can vary across tissues. Mg(2+) serves as cofactor. GlcNAcylation at Ser-529 by OGT decreases enzyme activity, leading to redirect glucose flux through the oxidative pentose phosphate pathway. Glycosylation is stimulated by both hypoxia and glucose deprivation.

Its subcellular location is the cytoplasm. It carries out the reaction beta-D-fructose 6-phosphate + ATP = beta-D-fructose 1,6-bisphosphate + ADP + H(+). It functions in the pathway carbohydrate degradation; glycolysis; D-glyceraldehyde 3-phosphate and glycerone phosphate from D-glucose: step 3/4. Its activity is regulated as follows. Allosterically activated by ADP, AMP, or fructose 2,6-bisphosphate, and allosterically inhibited by ATP or citrate. GlcNAcylation by OGT overcomes allosteric regulation. In terms of biological role, catalyzes the phosphorylation of D-fructose 6-phosphate to fructose 1,6-bisphosphate by ATP, the first committing step of glycolysis. Negatively regulates the phagocyte oxidative burst in response to bacterial infection by controlling cellular NADPH biosynthesis and NADPH oxidase-derived reactive oxygen species. Upon macrophage activation, drives the metabolic switch toward glycolysis, thus preventing glucose turnover that produces NADPH via pentose phosphate pathway. This is ATP-dependent 6-phosphofructokinase, liver type (Pfkl) from Rattus norvegicus (Rat).